A 465-amino-acid polypeptide reads, in one-letter code: Iron-sulfur cluster assembly SufBD family protein SE_0610 (465 aa).

Belongs to the iron-sulfur cluster assembly SufBD family.

This Staphylococcus epidermidis (strain ATCC 12228 / FDA PCI 1200) protein is Iron-sulfur cluster assembly SufBD family protein SE_0610.